We begin with the raw amino-acid sequence, 841 residues long: Taste receptor type 1 member 1 (841 aa).

The first 20 residues, 1–20, serve as a signal peptide directing secretion; that stretch reads MLLCTARLVGLQLLISCCWA. At 21 to 567 the chain is on the extracellular side; sequence FACHSTESSP…VFLALREHTS (547 aa). N-linked (GlcNAc...) asparagine glycosylation is found at N87, N88, N95, N291, N479, and N529. The helical transmembrane segment at 568–588 threads the bilayer; sequence WVLLAANTLLLLLLLGTAGLF. The Cytoplasmic portion of the chain corresponds to 589–603; that stretch reads AWHLDTPVVRSAGGR. The chain crosses the membrane as a helical span at residues 604–624; sequence LCFLMLGSLAAGSGSLYGFFG. Over 625-639 the chain is Extracellular; sequence EPTRPACLLRQALFA. Residues 640-660 form a helical membrane-spanning segment; the sequence is LGFTIFLSCLTVRSFQLIIIF. Topologically, residues 661–680 are cytoplasmic; that stretch reads KFSTKVPTFYHAWVQNHGAG. Residues 681–701 traverse the membrane as a helical segment; the sequence is LFVMISSAAQLLICLTWLVVW. At 702 to 725 the chain is on the extracellular side; that stretch reads TPLPAREYQRFPHLVMLECTETNS. The helical transmembrane segment at 726-746 threads the bilayer; the sequence is LGFILAFLYNGLLSISAFACS. The Cytoplasmic portion of the chain corresponds to 747 to 761; the sequence is YLGKDLPENYNEAKC. The helical transmembrane segment at 762–782 threads the bilayer; it reads VTFSLLFNFVSWIAFFTTASV. Residues 783–795 are Extracellular-facing; it reads YDGKYLPAANMMA. A helical membrane pass occupies residues 796–816; that stretch reads GLSSLSSGFGGYFLPKCYVIL. Residues 817 to 841 lie on the Cytoplasmic side of the membrane; sequence CRPDLNSTEHFQASIQDYTRRCGST.

This sequence belongs to the G-protein coupled receptor 3 family. TAS1R subfamily. Forms heterodimers with TAS1R3.

Its subcellular location is the cell membrane. Its function is as follows. Putative taste receptor. TAS1R1/TAS1R3 responds to the umami taste stimulus (the taste of monosodium glutamate). Sequence differences within and between species can significantly influence the selectivity and specificity of taste responses. The chain is Taste receptor type 1 member 1 (TAS1R1) from Homo sapiens (Human).